A 467-amino-acid chain; its full sequence is Mothers against decapentaplegic homolog 9 (467 aa).

The MH1 domain occupies 16 to 140 (PAVKRLLGWK…YRRVETPVLP (125 aa)). 4 residues coordinate Zn(2+): cysteine 68, cysteine 113, cysteine 125, and histidine 130. Residues 174–246 (NATYPDSFQQ…SETQSGQPVD (73 aa)) are disordered. Low complexity predominate over residues 205–220 (SYPHSPGSPSEPESPY). Residues 273-467 (WCSVAYYELN…SPHNPISSVS (195 aa)) form the MH2 domain.

The protein belongs to the dwarfin/SMAD family. Interaction with the co-SMAD SMAD4. Interacts with PEBP2-alpha subunit. Interacts with RANBP3L. Phosphorylated on serine by BMP (bone morphogenetic proteins) type 1 receptor kinase. As to expression, expressed in heart, brain, placenta, lung, skeletal muscle, prostate, testis, ovary and small intestine. Also expressed in fetal brain, lung and kidney.

It is found in the cytoplasm. The protein resides in the nucleus. In terms of biological role, transcriptional modulator activated by BMP (bone morphogenetic proteins) type 1 receptor kinase. SMAD9 is a receptor-regulated SMAD (R-SMAD). In Homo sapiens (Human), this protein is Mothers against decapentaplegic homolog 9 (SMAD9).